The primary structure comprises 200 residues: Pyridoxal 5'-phosphate synthase subunit PdxT (200 aa).

52–54 serves as a coordination point for L-glutamine; the sequence is GES. The Nucleophile role is filled by cysteine 84. Residues arginine 116 and 145–146 each bind L-glutamine; that span reads IR. Residues histidine 181 and glutamate 183 each act as charge relay system in the active site.

It belongs to the glutaminase PdxT/SNO family. As to quaternary structure, in the presence of PdxS, forms a dodecamer of heterodimers. Only shows activity in the heterodimer.

The enzyme catalyses aldehydo-D-ribose 5-phosphate + D-glyceraldehyde 3-phosphate + L-glutamine = pyridoxal 5'-phosphate + L-glutamate + phosphate + 3 H2O + H(+). The catalysed reaction is L-glutamine + H2O = L-glutamate + NH4(+). The protein operates within cofactor biosynthesis; pyridoxal 5'-phosphate biosynthesis. In terms of biological role, catalyzes the hydrolysis of glutamine to glutamate and ammonia as part of the biosynthesis of pyridoxal 5'-phosphate. The resulting ammonia molecule is channeled to the active site of PdxS. This Saccharolobus islandicus (strain Y.G.57.14 / Yellowstone #1) (Sulfolobus islandicus) protein is Pyridoxal 5'-phosphate synthase subunit PdxT.